The chain runs to 260 residues: Endonuclease NucS (260 aa).

Belongs to the NucS endonuclease family.

Its subcellular location is the cytoplasm. Its function is as follows. Cleaves both 3' and 5' ssDNA extremities of branched DNA structures. The sequence is that of Endonuclease NucS from Methanopyrus kandleri (strain AV19 / DSM 6324 / JCM 9639 / NBRC 100938).